We begin with the raw amino-acid sequence, 1256 residues long: Centrosome and spindle pole-associated protein 1 (1256 aa).

Coiled coils occupy residues A38–D62 and E114–L135. Positions G189 to S208 are enriched in basic and acidic residues. Disordered stretches follow at residues G189 to S244 and A381 to F403. Polar residues predominate over residues L222 to N232. Phosphoserine is present on S244. Positions S244–L270 form a coiled coil. A coiled-coil region spans residues Q417 to A449. Phosphoserine is present on residues S459 and S527. Positions S625–N669 form a coiled coil. Disordered regions lie at residues A735–E757 and E813–E853. Residues N736–P748 are compositionally biased toward polar residues. Phosphoserine occurs at positions 901 and 920. Residues S913–A932 are disordered. The stretch at A925–M964 forms a coiled coil. Position 966 is a phosphoserine (S966). Disordered regions lie at residues E1114–V1147 and L1232–G1256. Polar residues predominate over residues F1246–G1256.

Interacts with PLEKHG6. Interacts with ARMC9, TOGARAM1, CCDC66, CEP104 and CEP290. Post-translationally, phosphorylated. Phosphorylation increases in colcemide-treated cells. Expressed in adult and fetal brain with enrichment in the cerebellum. Detected in testis.

It localises to the cytoplasm. The protein resides in the cytoskeleton. The protein localises to the microtubule organizing center. It is found in the centrosome. Its subcellular location is the spindle. It localises to the spindle pole. The protein resides in the cell projection. The protein localises to the cilium. May play a role in cell-cycle-dependent microtubule organization. This is Centrosome and spindle pole-associated protein 1 (CSPP1) from Homo sapiens (Human).